The chain runs to 287 residues: Ribosomal RNA small subunit methyltransferase I (287 aa).

The protein belongs to the methyltransferase superfamily. RsmI family.

It localises to the cytoplasm. It carries out the reaction cytidine(1402) in 16S rRNA + S-adenosyl-L-methionine = 2'-O-methylcytidine(1402) in 16S rRNA + S-adenosyl-L-homocysteine + H(+). Functionally, catalyzes the 2'-O-methylation of the ribose of cytidine 1402 (C1402) in 16S rRNA. This is Ribosomal RNA small subunit methyltransferase I from Streptococcus pyogenes serotype M1.